Reading from the N-terminus, the 328-residue chain is DNA-directed RNA polymerase subunit alpha (328 aa).

The interval 1–232 is alpha N-terminal domain (alpha-NTD); the sequence is MSTQGFLKPR…DQISVFAALE (232 aa). The segment at 248–328 is alpha C-terminal domain (alpha-CTD); sequence IDPVLLRPVD…NWPPLGLERP (81 aa).

It belongs to the RNA polymerase alpha chain family. Homodimer. The RNAP catalytic core consists of 2 alpha, 1 beta, 1 beta' and 1 omega subunit. When a sigma factor is associated with the core the holoenzyme is formed, which can initiate transcription.

It catalyses the reaction RNA(n) + a ribonucleoside 5'-triphosphate = RNA(n+1) + diphosphate. In terms of biological role, DNA-dependent RNA polymerase catalyzes the transcription of DNA into RNA using the four ribonucleoside triphosphates as substrates. In Bordetella bronchiseptica (strain ATCC BAA-588 / NCTC 13252 / RB50) (Alcaligenes bronchisepticus), this protein is DNA-directed RNA polymerase subunit alpha.